Consider the following 209-residue polypeptide: NADH-ubiquinone oxidoreductase subunit 9 (209 aa).

Belongs to the complex I 30 kDa subunit family. As to quaternary structure, complex I is composed of about 30 different subunits.

The protein resides in the mitochondrion inner membrane. The catalysed reaction is a ubiquinone + NADH + 5 H(+)(in) = a ubiquinol + NAD(+) + 4 H(+)(out). Core subunit of the mitochondrial membrane respiratory chain NADH dehydrogenase (Complex I) that is believed to belong to the minimal assembly required for catalysis. Complex I functions in the transfer of electrons from NADH to the respiratory chain. The immediate electron acceptor for the enzyme is believed to be ubiquinone. This is NADH-ubiquinone oxidoreductase subunit 9 (NAD9) from Paramecium primaurelia.